The primary structure comprises 161 residues: Anaerobic nitrite reductase GLB1 (161 aa).

Residues 9–157 (VFTEEQEALV…LVAAIKSEMK (149 aa)) form the Globin domain. The short motif at 42–46 (EIAPS) is the Homodimerization element. Residues Ser-52, Lys-66, His-70, Arg-100, and His-105 each contribute to the heme b site. Positions 112-123 (NEHFETRFALLE) match the Homodimerization motif.

This sequence belongs to the plant globin family. Homodimer. Requires heme b as cofactor. In terms of tissue distribution, root specific.

It is found in the cytoplasm. The protein localises to the nucleus. It carries out the reaction Fe(III)-heme b-[protein] + nitric oxide + H2O = Fe(II)-heme b-[protein] + nitrite + 2 H(+). In terms of biological role, phytoglobin that reduces nitrite to nitric oxide (NO) under anoxic conditions (e.g. during flooding or in waterlogged soil) and upon root nodulation. Required for general plant development and during nodulation, especially for the onset of symbiosis. Monitors nitric oxide (NO) levels during early phase of the nitrogen-fixing symbiosis and buffers oxygen in functioning nodules. May not function as an oxygen storage or transport protein. Has an unusually high affinity for O(2) through a hexacoordinate heme iron because of a very low dissociation constant. The sequence is that of Anaerobic nitrite reductase GLB1 (GLB1) from Trema tomentosum (Peach-leaf poison-bush).